The sequence spans 185 residues: Ribosome-recycling factor (185 aa).

Belongs to the RRF family.

It localises to the cytoplasm. Responsible for the release of ribosomes from messenger RNA at the termination of protein biosynthesis. May increase the efficiency of translation by recycling ribosomes from one round of translation to another. The polypeptide is Ribosome-recycling factor (Citrifermentans bemidjiense (strain ATCC BAA-1014 / DSM 16622 / JCM 12645 / Bem) (Geobacter bemidjiensis)).